Reading from the N-terminus, the 101-residue chain is Ubiquitin-related modifier 1 (101 aa).

Glycine 101 is subject to 1-thioglycine. Glycine 101 participates in a covalent cross-link: Glycyl lysine isopeptide (Gly-Lys) (interchain with K-? in acceptor proteins).

Belongs to the URM1 family. Post-translationally, C-terminal thiocarboxylation occurs in 2 steps, it is first acyl-adenylated (-COAMP) via the hesA/moeB/thiF part of UBA4, then thiocarboxylated (-COSH) via the rhodanese domain of UBA4.

The protein resides in the cytoplasm. Its pathway is tRNA modification; 5-methoxycarbonylmethyl-2-thiouridine-tRNA biosynthesis. Functionally, acts as a sulfur carrier required for 2-thiolation of mcm(5)S(2)U at tRNA wobble positions of cytosolic tRNA(Lys), tRNA(Glu) and tRNA(Gln). Serves as sulfur donor in tRNA 2-thiolation reaction by being thiocarboxylated (-COSH) at its C-terminus by the MOCS3 homolog UBA4. The sulfur is then transferred to tRNA to form 2-thiolation of mcm(5)S(2)U. Prior mcm(5) tRNA modification by the elongator complex is required for 2-thiolation. Also acts as a ubiquitin-like protein (UBL) that is covalently conjugated via an isopeptide bond to lysine residues of target proteins such as AHP1. The thiocarboxylated form serves as substrate for conjugation and oxidative stress specifically induces the formation of UBL-protein conjugates. In Candida albicans (strain SC5314 / ATCC MYA-2876) (Yeast), this protein is Ubiquitin-related modifier 1.